A 280-amino-acid chain; its full sequence is Hydroxyethylthiazole kinase (280 aa).

A substrate-binding site is contributed by Met50. Residues Lys125 and Thr178 each coordinate ATP. Gly205 lines the substrate pocket.

It belongs to the Thz kinase family. Requires Mg(2+) as cofactor.

The enzyme catalyses 5-(2-hydroxyethyl)-4-methylthiazole + ATP = 4-methyl-5-(2-phosphooxyethyl)-thiazole + ADP + H(+). It participates in cofactor biosynthesis; thiamine diphosphate biosynthesis; 4-methyl-5-(2-phosphoethyl)-thiazole from 5-(2-hydroxyethyl)-4-methylthiazole: step 1/1. In terms of biological role, catalyzes the phosphorylation of the hydroxyl group of 4-methyl-5-beta-hydroxyethylthiazole (THZ). The chain is Hydroxyethylthiazole kinase from Lacticaseibacillus paracasei (strain ATCC 334 / BCRC 17002 / CCUG 31169 / CIP 107868 / KCTC 3260 / NRRL B-441) (Lactobacillus paracasei).